The following is a 337-amino-acid chain: Ral GTPase-activating protein subunit alpha-1 (337 aa).

In terms of assembly, component of the heterodimeric RalGAP1 complex with RALGAPB. Heterodimerization is required for activity. Interacts with the HLH region of TCF3/isoform E12.

The protein resides in the cytoplasm. It is found in the nucleus. Functionally, catalytic subunit of the heterodimeric RalGAP1 complex which acts as a GTPase activator for the Ras-like small GTPases RALA and RALB. The sequence is that of Ral GTPase-activating protein subunit alpha-1 from Sus scrofa (Pig).